A 307-amino-acid chain; its full sequence is Thymidylate synthase (307 aa).

Arg44 contributes to the dUMP binding site. Residue Ser108 is modified to Phosphoserine. Residues Arg169–Arg170, Cys189–His190, Arg209–Asp212, Asn220, and His250–Tyr252 each bind dUMP. Catalysis depends on Cys189, which acts as the Nucleophile. A (6R)-5,10-methylene-5,6,7,8-tetrahydrofolate-binding site is contributed by Asp212. Residues Lys286 and Lys302 each participate in a glycyl lysine isopeptide (Lys-Gly) (interchain with G-Cter in SUMO2) cross-link. Ala306 contributes to the (6R)-5,10-methylene-5,6,7,8-tetrahydrofolate binding site.

It belongs to the thymidylate synthase family. As to quaternary structure, homodimer.

It localises to the nucleus. The protein resides in the cytoplasm. It is found in the mitochondrion. Its subcellular location is the mitochondrion matrix. The protein localises to the mitochondrion inner membrane. The enzyme catalyses dUMP + (6R)-5,10-methylene-5,6,7,8-tetrahydrofolate = 7,8-dihydrofolate + dTMP. The protein operates within pyrimidine metabolism; dTTP biosynthesis. Its function is as follows. Catalyzes the reductive methylation of 2'-deoxyuridine 5'-monophosphate (dUMP) to thymidine 5'-monophosphate (dTMP), using the cosubstrate, 5,10- methylenetetrahydrofolate (CH2H4folate) as a 1-carbon donor and reductant and contributes to the de novo mitochondrial thymidylate biosynthesis pathway. In Mus musculus (Mouse), this protein is Thymidylate synthase (Tyms).